The chain runs to 513 residues: Tryptophan--tRNA ligase 1 (513 aa).

The short motif at Pro-86–His-94 is the 'HIGH' region element. The 'KMSKS' region motif lies at Lys-393–Ser-397.

This sequence belongs to the class-I aminoacyl-tRNA synthetase family.

Its subcellular location is the cytoplasm. It catalyses the reaction tRNA(Trp) + L-tryptophan + ATP = L-tryptophyl-tRNA(Trp) + AMP + diphosphate + H(+). This is Tryptophan--tRNA ligase 1 from Halobacterium salinarum (strain ATCC 700922 / JCM 11081 / NRC-1) (Halobacterium halobium).